The primary structure comprises 498 residues: Delta(14)-sterol reductase erg24A (498 aa).

A run of 4 helical transmembrane segments spans residues 30 to 50 (LGAFVFIFGLSTLIYCLTFLC), 91 to 111 (VTVWVLSYYVLSLVLYVFLPG), 136 to 156 (ILILGGLALGTYMHGADFVVW), and 163 to 183 (YVQIITANLIICVVLAIFVYA). An N-linked (GlcNAc...) asparagine glycan is attached at Asn-257. The next 3 membrane-spanning stretches (helical) occupy residues 275–295 (IVLSTVFQTFYVLDALYMEPA), 302–322 (VIMDGFGYMLSFGHLVWVPFI), and 339–359 (LREILLILAVTGAGYAIFRGA). NADP(+) contacts are provided by residues Lys-363, Arg-367, Trp-395, and 402-403 (NY). Residue Asn-429 is glycosylated (N-linked (GlcNAc...) asparagine). Residues 444 to 464 (VRGWGMIFTYFFLVYFGALLI) form a helical membrane-spanning segment. NADP(+)-binding positions include Asp-470, 474–478 (CKSKY), and Tyr-485.

This sequence belongs to the ERG4/ERG24 family.

It is found in the endoplasmic reticulum membrane. It participates in steroid metabolism; ergosterol biosynthesis. In terms of biological role, delta(14)-sterol reductase; part of the third module of ergosterol biosynthesis pathway that includes the late steps of the pathway. Catalyzes the reduction of the C14=C15 double bond within 4,4,24-trimethyl ergosta-8,14,24(28)-trienolto produce 4,4-dimethylfecosterol. The third module or late pathway involves the ergosterol synthesis itself through consecutive reactions that mainly occur in the endoplasmic reticulum (ER) membrane. Firstly, the squalene synthase erg9 catalyzes the condensation of 2 farnesyl pyrophosphate moieties to form squalene, which is the precursor of all steroids. Squalene synthase is crucial for balancing the incorporation of farnesyl diphosphate (FPP) into sterol and nonsterol isoprene synthesis. Secondly, squalene is converted into lanosterol by the consecutive action of the squalene epoxidase erg1 and the lanosterol synthase erg7. Then, the delta(24)-sterol C-methyltransferase erg6 methylates lanosterol at C-24 to produce eburicol. Eburicol is the substrate of the sterol 14-alpha demethylase encoded by cyp51A and cyp51B, to yield 4,4,24-trimethyl ergosta-8,14,24(28)-trienol. The C-14 reductase erg24 then reduces the C14=C15 double bond which leads to 4,4-dimethylfecosterol. A sequence of further demethylations at C-4, involving the C-4 demethylation complex containing the C-4 methylsterol oxidases erg25A or erg25B, the sterol-4-alpha-carboxylate 3-dehydrogenase erg26 and the 3-keto-steroid reductase erg27, leads to the production of fecosterol via 4-methylfecosterol. The C-8 sterol isomerase erg2 then catalyzes the reaction which results in unsaturation at C-7 in the B ring of sterols and thus converts fecosterol to episterol. The sterol-C5-desaturase erg3B then catalyzes the introduction of a C-5 double bond in the B ring to produce 5-dehydroepisterol. The 2 other sterol-C5-desaturases, erg3A and erg3C, seem to be less important in ergosterol biosynthesis. The C-22 sterol desaturase erg5 further converts 5-dehydroepisterol into ergosta-5,7,22,24(28)-tetraen-3beta-ol by forming the C-22(23) double bond in the sterol side chain. Finally, ergosta-5,7,22,24(28)-tetraen-3beta-ol is substrate of the C-24(28) sterol reductases erg4A and erg4B to produce ergosterol. Possible alternative sterol biosynthetic pathways might exist from fecosterol to ergosterol, depending on the activities of the erg3 isoforms. The protein is Delta(14)-sterol reductase erg24A of Aspergillus fumigatus (strain ATCC MYA-4609 / CBS 101355 / FGSC A1100 / Af293) (Neosartorya fumigata).